We begin with the raw amino-acid sequence, 333 residues long: Terminal uridylyltransferase 4 (333 aa).

UTP is bound by residues S54 and 65–68 (SDVD). Mg(2+) contacts are provided by D66 and D68. An RNA-binding site is contributed by R121. UTP-binding positions include 144–148 (GVRNS), K169, K173, and 188–189 (SY). Residues 237-302 (LGTQVLDFLH…WCIEDPYELN (66 aa)) enclose the PAP-associated domain.

The protein belongs to the DNA polymerase type-B-like family. In terms of assembly, monomer. It depends on Mg(2+) as a cofactor. The cofactor is Mn(2+).

The enzyme catalyses RNA(n) + UTP = RNA(n)-3'-uridine ribonucleotide + diphosphate. The 3' uridylated RNA substrate is involved in the selective incorporation of UTP; UTP binding is favored due to the constraint posed on the positioning of the NTP base by the continuous stacking interactions between Tyr-189 side chain, the bound NTP, and the terminal nucleoside base of the RNA substrate. Its function is as follows. Terminal uridylyltransferase which, specifically, catalyzes the addition of Us to the 3'-hydroxyl group of single-stranded RNAs with a 3'-terminal U. In Trypanosoma brucei brucei (strain 927/4 GUTat10.1), this protein is Terminal uridylyltransferase 4.